A 115-amino-acid chain; its full sequence is Small ribosomal subunit protein uS14m (115 aa).

It belongs to the universal ribosomal protein uS14 family. In terms of assembly, component of the mitochondrial small ribosomal subunit (mt-SSU). Mature yeast 74S mitochondrial ribosomes consist of a small (37S) and a large (54S) subunit. The 37S small subunit contains a 15S ribosomal RNA (15S mt-rRNA) and 34 different proteins. The 54S large subunit contains a 21S rRNA (21S mt-rRNA) and 46 different proteins.

The protein resides in the mitochondrion. Its function is as follows. Component of the mitochondrial ribosome (mitoribosome), a dedicated translation machinery responsible for the synthesis of mitochondrial genome-encoded proteins, including at least some of the essential transmembrane subunits of the mitochondrial respiratory chain. The mitoribosomes are attached to the mitochondrial inner membrane and translation products are cotranslationally integrated into the membrane. This chain is Small ribosomal subunit protein uS14m (MRP2), found in Saccharomyces cerevisiae (strain ATCC 204508 / S288c) (Baker's yeast).